The primary structure comprises 2493 residues: Polyprotein P1234 (2493 aa).

The Alphavirus-like MT domain occupies E28–H259. The interval G244–V263 is nsP1 membrane-binding. A lipid anchor (S-palmitoyl cysteine; by host) is attached at C419. In terms of domain architecture, (+)RNA virus helicase ATP-binding spans E690–K841. An a ribonucleoside 5'-triphosphate-binding site is contributed by G721–S728. The 149-residue stretch at S842–A990 folds into the (+)RNA virus helicase C-terminal domain. The Peptidase C9 domain maps to D1003–S1322. The interval V1004–T1023 is nucleolus localization signal. The For cysteine protease nsP2 activity role is filled by C1012. Residues V1056–S1065 carry the Nuclear export signal motif. The For cysteine protease nsP2 activity role is filled by H1081. The Nuclear localization signal motif lies at P1179–V1183. One can recognise a Macro domain in the interval A1330–E1489. ADP-D-ribose contacts are provided by D1339, N1353, G1361, G1441, I1442, and F1443. Zn(2+) is bound by residues C1596, C1598, C1621, and C1639. 2 disordered regions span residues P1664–Q1684 and A1790–P1826. Over residues R1814 to S1823 the composition is skewed to polar residues. 2 repeat units span residues R1818–A1839 and R1852–A1873. A 2 X 21 AA approximate repeats, binding to host FXR family members region spans residues R1818–A1873. The 116-residue stretch at D2250–A2365 folds into the RdRp catalytic domain.

Interacts with non-structural protein 3. Interacts with RNA-directed RNA polymerase nsP4. Interacts with protease nsP2. interacts with itself. As to quaternary structure, interacts with mRNA-capping enzyme nsP1. Interacts with host DDX1. Interacts with host DDX3. Interacts (via C-terminus) with host FXR1; this interaction inhibits the formation of host stress granules on viral mRNAs and the nsp3-FXR1 complexes bind viral RNAs and probably orchestrate the assembly of viral replication complexes. Interacts (via C-terminus) with host FXR2; this interaction inhibits the formation of host stress granules on viral mRNAs and the nsp3-FXR2 complexes bind viral RNAs and probably orchestrate the assembly of viral replication complexes. Interacts (via C-terminus) with host FMR1; this interaction inhibits the formation of host stress granules on viral mRNAs and the nsp3-FMR1 complexes bind viral RNAs and probably orchestrate the assembly of viral replication complexes. In terms of assembly, interacts with mRNA-capping enzyme nsP1. Interacts with protease nsP2. interacts with itself. Interacts with RNA-directed RNA polymerase nsP4. Interacts with mRNA-capping enzyme nsP1. Interacts with KPNA1/karyopherin-alpha1; this interaction probably allows the active transport of protease nsP2 into the host nucleus. The cofactor is Mg(2+). It depends on Mn(2+) as a cofactor. Post-translationally, specific enzymatic cleavages in vivo yield mature proteins. The processing of the polyprotein is temporally regulated. In early stages (1.7 hpi), P1234 is first cleaved in trans through its nsP2 protease activity, releasing P123' and nsP4, which associate to form the early replication complex. At the same time, P1234 is also cut at the nsP1/nsP2 site early in infection but with lower efficiency. After replication of the viral minus-strand RNAs (4 hpi), the polyproteins are cut at the nsP1/nsP2 and nsP2/nsP3 sites very efficiently, preventing accumulation of P123' and P1234 and allowing the formation of the late replication complex. NsP3'/nsP4 site is not cleaved anymore and P34 is produced rather than nsP4. Specific enzymatic cleavages in vivo yield mature proteins. The processing of the polyprotein is temporally regulated. In early stages (1.7 hpi), P123 is cleaved at the nsP1/nsP2 site with low efficiency. After replication of the viral minus-strand RNAs (4 hpi), the polyproteins are cut at the nsP1/nsP2 and nsP2/nsP3 sites very efficiently, preventing accumulation of P123 and allowing the formation of the late replication complex. In terms of processing, specific enzymatic cleavages in vivo yield mature proteins. The processing of the polyprotein is temporally regulated. In early stages (1.7 hpi), P123' is cleaved at the nsP1/nsP2 site with low efficiency. After replication of the viral minus-strand RNAs (4 hpi), the polyproteins are cut at the nsP1/nsP2 and nsP2/nsP3 sites very efficiently, preventing accumulation of P123' and allowing the formation of the late replication complex. Post-translationally, palmitoylated by host palmitoyltransferases ZDHHC2 and ZDHHC19. Phosphorylated by host on serines and threonines. In terms of processing, ubiquitinated; targets the protein for rapid degradation via the ubiquitin system. Nsp4 is present in extremely low quantities due to low frequency of translation through the amber stop-codon and the degradation by the ubiquitin pathway.

It localises to the host cytoplasmic vesicle membrane. The protein localises to the host cell membrane. Its subcellular location is the host cell projection. It is found in the host filopodium. The protein resides in the host nucleus. It localises to the host cytoplasm. It carries out the reaction GTP + S-adenosyl-L-methionine = N(7)-methyl-GTP + S-adenosyl-L-homocysteine. The enzyme catalyses N(7)-methyl-GTP + L-histidyl-[protein] = N(tele)-(N(7)-methylguanosine 5'-phospho)-L-histidyl-[protein] + diphosphate. The catalysed reaction is N(tele)-(N(7)-methylguanosine 5'-phospho)-L-histidyl-[protein] + a 5'-end diphospho-(purine-ribonucleoside) in mRNA + H(+) = a 5'-end (N(7)-methyl 5'-triphosphoguanosine)-(purine-ribonucleoside) in mRNA + L-histidyl-[protein]. It catalyses the reaction a 5'-end triphospho-ribonucleoside in mRNA + H2O = a 5'-end diphospho-ribonucleoside in mRNA + phosphate + H(+). It carries out the reaction a ribonucleoside 5'-triphosphate + H2O = a ribonucleoside 5'-diphosphate + phosphate + H(+). The enzyme catalyses ATP + H2O = ADP + phosphate + H(+). The catalysed reaction is RNA(n) + a ribonucleoside 5'-triphosphate = RNA(n+1) + diphosphate. It catalyses the reaction 4-O-(ADP-D-ribosyl)-L-aspartyl-[protein] + H2O = L-aspartyl-[protein] + ADP-D-ribose + H(+). It carries out the reaction 5-O-(ADP-D-ribosyl)-L-glutamyl-[protein] + H2O = L-glutamyl-[protein] + ADP-D-ribose + H(+). The enzyme catalyses RNA(n) + ATP = RNA(n)-3'-adenine ribonucleotide + diphosphate. The catalysed reaction is ADP-alpha-D-ribose 1''-phosphate + H2O = ADP-D-ribose + phosphate. With respect to regulation, inhibited by sinefungin. Inactive precursor of the viral replicase, which is activated by cleavages carried out by the viral protease nsP2. Functionally, the early replication complex formed by the polyprotein P123 and nsP4 synthesizes the minus-strand RNAs (antigenome). Polyprotein P123 is a short-lived polyprotein that accumulates during early stage of infection. As soon P123 is cleaved into mature proteins, the plus-strand RNAs synthesis begins. In terms of biological role, the early replication complex formed by the polyprotein P123' and nsP4 synthesizes minus-strand RNAs (antigenome). Polyprotein P123' is a short-lived polyprotein that accumulates during early stage of infection. As soon P123' is cleaved into mature proteins, the plus-strand RNAs synthesis begins. Its function is as follows. Cytoplasmic capping enzyme that catalyzes two virus-specific reactions: methyltransferase and nsP1 guanylyltransferase. mRNA-capping is necessary since all viral RNAs are synthesized in the cytoplasm, and host capping enzymes are restricted to the nucleus. The enzymatic reaction involves a covalent link between 7-methyl-GMP and nsP1, whereas eukaryotic capping enzymes form a covalent complex only with GMP. NsP1 capping consists in the following reactions: GTP is first methylated into 7-methyl-GMP and then is covalently linked to nsP1 to form the m7GMp-nsP1 complex from which 7-methyl-GMP complex is transferred to the mRNA to create the cap structure. NsP1 is also needed for the initiation of the minus-strand RNAs synthesis. Probably serves as a membrane anchor for the replication complex composed of nsP1-nsP4. Nsp1 is needed for the initiation of the minus-strand RNAs synthesis. Palmitoylated nsP1 is remodeling host cell cytoskeleton, and induces filopodium-like structure formation at the surface of the host cell. Multifunctional protein whose N-terminus is part of the RNA polymerase complex and displays NTPase, RNA triphosphatase and helicase activities. NTPase and RNA triphosphatase are involved in viral RNA capping and helicase keeps a check on the dsRNA replication intermediates. The C-terminus harbors a protease that specifically cleaves the polyproteins and releases the mature proteins. Required for the shutoff of minus-strand RNAs synthesis. Inhibits host translation to ensure maximal viral gene expression and evade host immune response. Functionally, seems to be essential for minus-strand RNAs and subgenomic 26S mRNAs synthesis. Displays mono-ADP-ribosylhydrolase activity. ADP-ribosylation is a post-translational modification that controls various processes of the host cell and the virus probably needs to revert it for optimal viral replication. Binds proteins of FXR family and sequesters them into the viral RNA replication complexes thereby inhibiting the formation of host stress granules on viral mRNAs. The nsp3-FXR complexes bind viral RNAs and probably orchestrate the assembly of viral replication complexes, thanks to the ability of FXR family members to self-assemble and bind DNA. In terms of biological role, seems to be essential for minus-strand RNAs and subgenomic 26S mRNAs synthesis. Displays mono-ADP-ribosylhydrolase activity. ADP-ribosylation is a post-translational modification that controls various processes of the host cell and the virus probably needs to revert it for optimal viral replication. Binds proteins of FXR family and sequesters them into the viral RNA replication complexes thereby inhibiting the formation of host stress granules on viral mRNAs. The nsp3'-FXR complexes bind viral RNAs and probably orchestrate the assembly of viral replication complexes, thanks to the ability of FXR family members to self-assemble and bind DNA. Its function is as follows. RNA dependent RNA polymerase. Replicates genomic and antigenomic RNA by recognizing replications specific signals. The early replication complex formed by the polyprotein P123 and nsP4 synthesizes minus-strand RNAs. The late replication complex composed of fully processed nsP1-nsP4 is responsible for the production of genomic and subgenomic plus-strand RNAs. The chain is Polyprotein P1234 from Bos taurus (Bovine).